Reading from the N-terminus, the 619-residue chain is ESX-2 secretion system protein EccA2 (619 aa).

Residue 373 to 380 (GPPGTGKT) participates in ATP binding.

The protein belongs to the CbxX/CfxQ family. Part of the ESX-2 / type VII secretion system (T7SS), which is composed of cytosolic and membrane components. Residues 522-619 interact with an artificial EsxB-EsxA heterodimer from the adjacent ESX-1 locus.

The protein resides in the cytoplasm. Its function is as follows. Shows ATPase activity. Could provide energy for export of ESX-2 substrates. This is ESX-2 secretion system protein EccA2 (eccA2) from Mycobacterium tuberculosis (strain ATCC 25618 / H37Rv).